Here is a 683-residue protein sequence, read N- to C-terminus: DNA ligase (683 aa).

NAD(+) is bound by residues 29 to 33 (DAEFD), 79 to 80 (SL), and glutamate 109. Lysine 111 acts as the N6-AMP-lysine intermediate in catalysis. Residues arginine 132, glutamate 172, lysine 288, and lysine 312 each coordinate NAD(+). Positions 406, 409, 425, and 431 each coordinate Zn(2+). The region spanning 595 to 683 (SVPRTLAGVT…GPPAEAGEPT (89 aa)) is the BRCT domain.

It belongs to the NAD-dependent DNA ligase family. LigA subfamily. Requires Mg(2+) as cofactor. It depends on Mn(2+) as a cofactor.

It catalyses the reaction NAD(+) + (deoxyribonucleotide)n-3'-hydroxyl + 5'-phospho-(deoxyribonucleotide)m = (deoxyribonucleotide)n+m + AMP + beta-nicotinamide D-nucleotide.. Its function is as follows. DNA ligase that catalyzes the formation of phosphodiester linkages between 5'-phosphoryl and 3'-hydroxyl groups in double-stranded DNA using NAD as a coenzyme and as the energy source for the reaction. It is essential for DNA replication and repair of damaged DNA. This Mycobacterium ulcerans (strain Agy99) protein is DNA ligase.